The primary structure comprises 584 residues: Pectinesterase 3 (584 aa).

The N-terminal stretch at 1 to 50 (MTRIKEFFTKLSESSTNQNISNIPKKKKKLFLALFATLLVVAAVIGIVAG) is a signal peptide. Positions 51–266 (VNSRKNSGDN…LSTGDRRLLQ (216 aa)) are excised as a propeptide. Residues Asn-108, Asn-129, and Asn-226 are each glycosylated (N-linked (GlcNAc...) asparagine). 2 residues coordinate substrate: Thr-348 and Gln-378. Asp-401 serves as the catalytic Proton donor. Cys-415 and Cys-435 are oxidised to a cystine. Asp-422 serves as the catalytic Nucleophile. Residues Arg-490 and Trp-492 each coordinate substrate.

It in the N-terminal section; belongs to the PMEI family. In the C-terminal section; belongs to the pectinesterase family. In the peel, expression is localized to the region of the flavedo close to the oil glands, and to the innermost layer of the albedo. In the lamella, expression is localized to the cell layers opposing the fruit tissue, and to the parenchyma surrounding the vascular tissue. In the fruit vesicles, expression is restricted to the peripheral cell layers and stalk cells. High levels of expression are detected in the core matrix.

The protein resides in the secreted. It localises to the cell wall. It catalyses the reaction [(1-&gt;4)-alpha-D-galacturonosyl methyl ester](n) + n H2O = [(1-&gt;4)-alpha-D-galacturonosyl](n) + n methanol + n H(+). The protein operates within glycan metabolism; pectin degradation; 2-dehydro-3-deoxy-D-gluconate from pectin: step 1/5. Its function is as follows. Acts in the modification of cell walls via demethylesterification of cell wall pectin. In Citrus sinensis (Sweet orange), this protein is Pectinesterase 3.